Reading from the N-terminus, the 472-residue chain is Membrane-bound lytic murein transglycosylase F (472 aa).

A signal peptide spans Met-1–Ala-24. The interval Asp-25 to Ala-259 is non-LT domain. The segment at Asp-260 to Glu-472 is LT domain. The active site involves Glu-306.

It in the N-terminal section; belongs to the bacterial solute-binding protein 3 family. In the C-terminal section; belongs to the transglycosylase Slt family.

It localises to the cell outer membrane. The catalysed reaction is Exolytic cleavage of the (1-&gt;4)-beta-glycosidic linkage between N-acetylmuramic acid (MurNAc) and N-acetylglucosamine (GlcNAc) residues in peptidoglycan, from either the reducing or the non-reducing ends of the peptidoglycan chains, with concomitant formation of a 1,6-anhydrobond in the MurNAc residue.. In terms of biological role, murein-degrading enzyme that degrades murein glycan strands and insoluble, high-molecular weight murein sacculi, with the concomitant formation of a 1,6-anhydromuramoyl product. Lytic transglycosylases (LTs) play an integral role in the metabolism of the peptidoglycan (PG) sacculus. Their lytic action creates space within the PG sacculus to allow for its expansion as well as for the insertion of various structures such as secretion systems and flagella. The chain is Membrane-bound lytic murein transglycosylase F from Methylobacillus flagellatus (strain ATCC 51484 / DSM 6875 / VKM B-1610 / KT).